Consider the following 248-residue polypeptide: UPF0736 protein Bcer98_0893 (248 aa).

Belongs to the UPF0736 family.

In Bacillus cytotoxicus (strain DSM 22905 / CIP 110041 / 391-98 / NVH 391-98), this protein is UPF0736 protein Bcer98_0893.